We begin with the raw amino-acid sequence, 105 residues long: Cell division protein FtsB (105 aa).

Over Met-1–Leu-3 the chain is Cytoplasmic. The chain crosses the membrane as a helical span at residues Phe-4 to Phe-21. Residues Gly-22–Asp-105 are Periplasmic-facing. A coiled-coil region spans residues Glu-28 to Asp-74.

It belongs to the FtsB family. In terms of assembly, part of a complex composed of FtsB, FtsL and FtsQ.

It localises to the cell inner membrane. Its function is as follows. Essential cell division protein. May link together the upstream cell division proteins, which are predominantly cytoplasmic, with the downstream cell division proteins, which are predominantly periplasmic. In Tolumonas auensis (strain DSM 9187 / NBRC 110442 / TA 4), this protein is Cell division protein FtsB.